Consider the following 193-residue polypeptide: MNFLAHLHLAHLADSSLSGNLLADFVRGNPATHYPPDVVEGIYMHRRIDVITDNLPEVREAREWFRHETRRVAPITLDVMWDHFLSRHWTQISPDFPLQAFVGYAHAQVATILPDSPPRFVNLNDYLWSEKWLERYRDMDFIQNVLNGMANRRPRLDALRDSWYDLDAHYDALEERFWHFYPRMMAQAARKAL.

Belongs to the AcpH family.

The catalysed reaction is holo-[ACP] + H2O = apo-[ACP] + (R)-4'-phosphopantetheine + H(+). Its function is as follows. Converts holo-ACP to apo-ACP by hydrolytic cleavage of the phosphopantetheine prosthetic group from ACP. The sequence is that of Acyl carrier protein phosphodiesterase from Salmonella newport (strain SL254).